A 507-amino-acid polypeptide reads, in one-letter code: UDP-N-acetylmuramoyl-L-alanyl-D-glutamate--2,6-diaminopimelate ligase (507 aa).

Residue serine 32 participates in UDP-N-acetyl-alpha-D-muramoyl-L-alanyl-D-glutamate binding. Position 117-123 (117-123 (GTNGKTT)) interacts with ATP. UDP-N-acetyl-alpha-D-muramoyl-L-alanyl-D-glutamate-binding positions include 159 to 160 (TT), serine 186, glutamine 192, and arginine 194. The residue at position 226 (lysine 226) is an N6-carboxylysine. Residues arginine 400, 424–427 (DNPR), glycine 475, and glutamate 479 contribute to the meso-2,6-diaminopimelate site. Positions 424 to 427 (DNPR) match the Meso-diaminopimelate recognition motif motif.

The protein belongs to the MurCDEF family. MurE subfamily. Mg(2+) is required as a cofactor. Post-translationally, carboxylation is probably crucial for Mg(2+) binding and, consequently, for the gamma-phosphate positioning of ATP.

The protein resides in the cytoplasm. It carries out the reaction UDP-N-acetyl-alpha-D-muramoyl-L-alanyl-D-glutamate + meso-2,6-diaminopimelate + ATP = UDP-N-acetyl-alpha-D-muramoyl-L-alanyl-gamma-D-glutamyl-meso-2,6-diaminopimelate + ADP + phosphate + H(+). The protein operates within cell wall biogenesis; peptidoglycan biosynthesis. Functionally, catalyzes the addition of meso-diaminopimelic acid to the nucleotide precursor UDP-N-acetylmuramoyl-L-alanyl-D-glutamate (UMAG) in the biosynthesis of bacterial cell-wall peptidoglycan. The chain is UDP-N-acetylmuramoyl-L-alanyl-D-glutamate--2,6-diaminopimelate ligase from Prochlorococcus marinus (strain MIT 9313).